Consider the following 352-residue polypeptide: NADP-dependent oxidoreductase RED1 (352 aa).

NADP(+)-binding positions include 166–169 (GAVG), lysine 192, tyrosine 208, asparagine 231, and 285–287 (FIV).

It belongs to the NADP-dependent oxidoreductase L4BD family.

Its pathway is mycotoxin biosynthesis. Its function is as follows. NADP-dependent oxidoreductase; part of the Tox1B locus, one of the 2 loci that mediate the biosynthesis of T-toxin, a family of linear polyketides 37 to 45 carbons in length, of which the major component is 41 carbons, and which leads to high virulence to maize. One of the PKSs (PKS1 or PKS2) could synthesize a precursor, used subsequently by the other PKS as starter unit, to add additional carbons. Variability in the length of the final carbon backbone C35-47 could be achieved by varying the number of condensation cycles, or use of different starter or extender units or might be due to decarboxylation of the penultimate product, catalyzed by DEC1. Additional proteins are required for the biosynthesis of T-toxin, including oxidoreductases RED1, RED2, RED3, LAM1 and OXI1, as well as esterase TOX9. The polypeptide is NADP-dependent oxidoreductase RED1 (Cochliobolus heterostrophus (strain C4 / ATCC 48331 / race T) (Southern corn leaf blight fungus)).